Consider the following 125-residue polypeptide: Methylglyoxal synthase (125 aa).

The MGS-like domain maps to 1–125 (MTERLRIALI…TAEKLIKALD (125 aa)). Residues histidine 12, lysine 16, 38–41 (TGTT), and 59–60 (SG) each bind substrate. The active-site Proton donor/acceptor is the aspartate 65. Histidine 92 provides a ligand contact to substrate.

This sequence belongs to the methylglyoxal synthase family.

The enzyme catalyses dihydroxyacetone phosphate = methylglyoxal + phosphate. Its function is as follows. Catalyzes the formation of methylglyoxal from dihydroxyacetone phosphate. This Brucella anthropi (strain ATCC 49188 / DSM 6882 / CCUG 24695 / JCM 21032 / LMG 3331 / NBRC 15819 / NCTC 12168 / Alc 37) (Ochrobactrum anthropi) protein is Methylglyoxal synthase.